A 498-amino-acid polypeptide reads, in one-letter code: MASQGTKRSYEQMETGGERQNATEIRASVGRMVGGIGRFYIQMCTELKLSDYEGRLIQNSITIERMVLSAFDERRNKYLEEHPSAGKDPKKTGGPIYRRRDGKWVRELILYDKEEIRRIWRQANNGEDATAGLTHLMIWHSNLNDATYQRTRALVRTGMDPRMCSLMQGSTLPRRSGAAGAAVKGVGTMVMELIRMIKRGINDRNFWRGENGRRTRIAYERMCNILKGKFQTAAQRAMMDQVRESRNPGNAEIEDLIFLARSALILRGSVAHKSCLPACVYGLAVASGYDFEREGYSLVGIDPFRLLQNSQVFSLIRPNENPAHKSQLVWMACHSAAFEDLRVSSFIRGTRVIPRGQLSTRGVQIASNENMETMDSSTLELRSRYWAIRTRSGGNTNQQRASAGQISVQPTFSVQRNLPFERATIMAAFTGNTEGRTSDMRTEIIRMMESARPEDVSFQGRGVFELSDEKATNPIVPSFDMSNEGSYFFGDNAEEYDN.

Residues 1–18 carry the Unconventional nuclear localization signal motif; it reads MASQGTKRSYEQMETGGE. The interval 1-21 is disordered; sequence MASQGTKRSYEQMETGGERQN. The Bipartite nuclear localization signal signature appears at 198–216; that stretch reads KRGINDRNFWRGENGRRTR.

The protein belongs to the influenza viruses nucleoprotein family. Homomultimerizes to form the nucleocapsid. May bind host exportin-1/XPO1. Binds to viral genomic RNA. Protein-RNA contacts are mediated by a combination of electrostatic interactions between positively charged residues and the phosphate backbone and planar interactions between aromatic side chains and bases. Late in virus-infected cells, may be cleaved from a 56-kDa protein to a 53-kDa protein by a cellular caspase. This cleavage might be a marker for the onset of apoptosis in infected cells or have a specific function in virus host interaction.

The protein resides in the virion. It localises to the host nucleus. In terms of biological role, encapsidates the negative strand viral RNA, protecting it from nucleases. The encapsidated genomic RNA is termed the ribonucleoprotein (RNP) and serves as template for transcription and replication. The RNP needs to be localized in the host nucleus to start an infectious cycle, but is too large to diffuse through the nuclear pore complex. NP comprises at least 2 nuclear localization signals that are responsible for the active RNP import into the nucleus through cellular importin alpha/beta pathway. Later in the infection, nclear export of RNPs are mediated through viral proteins NEP interacting with M1 which binds nucleoproteins. It is possible that nucleoprotein binds directly host exportin-1/XPO1 and plays an active role in RNPs nuclear export. M1 interaction with RNP seems to hide nucleoprotein's nuclear localization signals. Soon after a virion infects a new cell, M1 dissociates from the RNP under acidification of the virion driven by M2 protein. Dissociation of M1 from RNP unmasks nucleoprotein's nuclear localization signals, targeting the RNP to the nucleus. This is Nucleoprotein from Influenza A virus (strain A/Duck/New Zealand/31/1976 H4N6).